A 197-amino-acid chain; its full sequence is Dephospho-CoA kinase (197 aa).

One can recognise a DPCK domain in the interval 3 to 197 (VLGLTGSIGL…IDELRGQRGS (195 aa)). 11–16 (GLGKST) is a binding site for ATP.

It belongs to the CoaE family.

It localises to the cytoplasm. The catalysed reaction is 3'-dephospho-CoA + ATP = ADP + CoA + H(+). It functions in the pathway cofactor biosynthesis; coenzyme A biosynthesis; CoA from (R)-pantothenate: step 5/5. In terms of biological role, catalyzes the phosphorylation of the 3'-hydroxyl group of dephosphocoenzyme A to form coenzyme A. The chain is Dephospho-CoA kinase from Mesorhizobium japonicum (strain LMG 29417 / CECT 9101 / MAFF 303099) (Mesorhizobium loti (strain MAFF 303099)).